The following is a 767-amino-acid chain: Photosystem I P700 chlorophyll a apoprotein A1 (767 aa).

The next 8 membrane-spanning stretches (helical) occupy residues 72 to 95 (IFSA…FHGA), 158 to 181 (LMAL…FHYH), 197 to 221 (LNHH…HVSL), 305 to 323 (IAHH…GHMY), 364 to 387 (WHAQ…QHMY), 403 to 429 (IGLF…IAMV), 451 to 473 (AIIS…LYIH), and 548 to 566 (FMVH…LILL). Positions 590 and 599 each coordinate [4Fe-4S] cluster. The next 2 helical transmembrane spans lie at 606–627 (HVFL…HFSW) and 681–703 (TSAY…MFLF). His692 provides a ligand contact to chlorophyll a'. Residues Met700 and Tyr708 each coordinate chlorophyll a. Trp709 provides a ligand contact to phylloquinone. A helical transmembrane segment spans residues 741–761 (AVGVAHYLLGGIATTWAFFHA).

The protein belongs to the PsaA/PsaB family. As to quaternary structure, the PsaA/B heterodimer binds the P700 chlorophyll special pair and subsequent electron acceptors. PSI consists of a core antenna complex that captures photons, and an electron transfer chain that converts photonic excitation into a charge separation. The cyanobacterial PSI reaction center is composed of one copy each of PsaA,B,C,D,E,F,I,J,K,L,M and X, and forms trimeric complexes. It depends on PSI electron transfer chain: 5 chlorophyll a, 1 chlorophyll a', 2 phylloquinones and 3 4Fe-4S clusters. PSI core antenna: 90 chlorophyll a, 22 carotenoids, 3 phospholipids and 1 galactolipid. P700 is a chlorophyll a/chlorophyll a' dimer, A0 is one or more chlorophyll a, A1 is one or both phylloquinones and FX is a shared 4Fe-4S iron-sulfur center. as a cofactor.

The protein localises to the cellular thylakoid membrane. The catalysed reaction is reduced [plastocyanin] + hnu + oxidized [2Fe-2S]-[ferredoxin] = oxidized [plastocyanin] + reduced [2Fe-2S]-[ferredoxin]. In terms of biological role, psaA and PsaB bind P700, the primary electron donor of photosystem I (PSI), as well as the electron acceptors A0, A1 and FX. PSI is a plastocyanin/cytochrome c6-ferredoxin oxidoreductase, converting photonic excitation into a charge separation, which transfers an electron from the donor P700 chlorophyll pair to the spectroscopically characterized acceptors A0, A1, FX, FA and FB in turn. Oxidized P700 is reduced on the lumenal side of the thylakoid membrane by plastocyanin or cytochrome c6. The sequence is that of Photosystem I P700 chlorophyll a apoprotein A1 from Synechococcus sp. (strain CC9902).